The sequence spans 180 residues: Bifunctional protein PyrR (180 aa).

A PRPP-binding motif is present at residues 99-111; that stretch reads VILVDDVLYTCRT.

It belongs to the purine/pyrimidine phosphoribosyltransferase family. PyrR subfamily. In terms of assembly, homodimer and homohexamer; in equilibrium.

It catalyses the reaction UMP + diphosphate = 5-phospho-alpha-D-ribose 1-diphosphate + uracil. Its function is as follows. Regulates transcriptional attenuation of the pyrimidine nucleotide (pyr) operon by binding in a uridine-dependent manner to specific sites on pyr mRNA. This disrupts an antiterminator hairpin in the RNA and favors formation of a downstream transcription terminator, leading to a reduced expression of downstream genes. Also displays a weak uracil phosphoribosyltransferase activity which is not physiologically significant. In Clostridium botulinum (strain Alaska E43 / Type E3), this protein is Bifunctional protein PyrR.